Consider the following 338-residue polypeptide: Lipoate-protein ligase A (338 aa).

The region spanning Asp29–Val216 is the BPL/LPL catalytic domain. ATP is bound by residues Arg71, Gly76–Phe79, and Lys134. A (R)-lipoate-binding site is contributed by Lys134.

It belongs to the LplA family. As to quaternary structure, monomer.

Its subcellular location is the cytoplasm. It carries out the reaction L-lysyl-[lipoyl-carrier protein] + (R)-lipoate + ATP = N(6)-[(R)-lipoyl]-L-lysyl-[lipoyl-carrier protein] + AMP + diphosphate + H(+). Its pathway is protein modification; protein lipoylation via exogenous pathway; protein N(6)-(lipoyl)lysine from lipoate: step 1/2. It participates in protein modification; protein lipoylation via exogenous pathway; protein N(6)-(lipoyl)lysine from lipoate: step 2/2. Its function is as follows. Catalyzes both the ATP-dependent activation of exogenously supplied lipoate to lipoyl-AMP and the transfer of the activated lipoyl onto the lipoyl domains of lipoate-dependent enzymes. The chain is Lipoate-protein ligase A from Aeromonas salmonicida (strain A449).